A 318-amino-acid chain; its full sequence is Putative HTH-type transcriptional regulatory protein TK0539 (318 aa).

The 59-residue stretch at 131–189 (LRELREKHGYSVNELAQLLGVSRKSLLNYERGEQAVSLDVAIQLEEIFDEALAEPIDIL) folds into the HTH cro/C1-type domain. The segment at residues 142–161 (VNELAQLLGVSRKSLLNYER) is a DNA-binding region (H-T-H motif).

The protein is Putative HTH-type transcriptional regulatory protein TK0539 of Thermococcus kodakarensis (strain ATCC BAA-918 / JCM 12380 / KOD1) (Pyrococcus kodakaraensis (strain KOD1)).